The following is a 657-amino-acid chain: Threonine--tRNA ligase (657 aa).

Residues 1–62 form the TGS domain; it reads MALDITFPDG…AHSGQLQIMT (62 aa). The segment at 240-538 is catalytic; it reads DHRVIGRDLD…LTEIYKGAFP (299 aa). Zn(2+) is bound by residues Cys-334, His-385, and His-515.

It belongs to the class-II aminoacyl-tRNA synthetase family. In terms of assembly, homodimer. Requires Zn(2+) as cofactor.

The protein localises to the cytoplasm. The enzyme catalyses tRNA(Thr) + L-threonine + ATP = L-threonyl-tRNA(Thr) + AMP + diphosphate + H(+). Catalyzes the attachment of threonine to tRNA(Thr) in a two-step reaction: L-threonine is first activated by ATP to form Thr-AMP and then transferred to the acceptor end of tRNA(Thr). Also edits incorrectly charged L-seryl-tRNA(Thr). The polypeptide is Threonine--tRNA ligase (Lacticaseibacillus paracasei (strain ATCC 334 / BCRC 17002 / CCUG 31169 / CIP 107868 / KCTC 3260 / NRRL B-441) (Lactobacillus paracasei)).